The chain runs to 172 residues: Light-harvesting complex-like protein OHP2, chloroplastic (172 aa).

The transit peptide at 1-43 (MSVASPIQCIRILNPSSSSSSSTASSSFRFSTTTKPCVFIIRC) directs the protein to the chloroplast. Residues 44 to 135 (SQTEGPLRRP…QPKNEISNGR (92 aa)) are Stromal-facing. The interval 45-90 (QTEGPLRRPSAPPTLREPQKPVPPSQPSSSPPPSPPPQKAVAVDGK) is disordered. Residues 64–82 (KPVPPSQPSSSPPPSPPPQ) are compositionally biased toward pro residues. A helical transmembrane segment spans residues 136–156 (WAMFGFAVGMLTEYATGSDLV). Residues 157–172 (DQVKILLSNFGILDLE) lie on the Lumenal side of the membrane.

This sequence belongs to the ELIP/psbS family. As to quaternary structure, component of a high molecular weight complex containing OHP1, OHP2 and HCF244, and PSII core proteins D1/D2, HCF136 and HCF173. Forms a trimeric complex with OHP1 and HCF244 that mutually stabilizes each subunit.

The protein resides in the plastid. It is found in the chloroplast thylakoid membrane. May play a photoprotective role within PSI in response to light stress. Forms a trimeric complex with OHP1 and HCF244 that is required to promote PSII core subunit assembly. The trimeric complex forms a transient PSII reaction center-like complex with PsbA, PsbD, PsbE, PsbF and PsbI subunits in thylakoids for early assembly of PSII as well as PSII repair. The trimeric complex is required for the recruitment of ribosomes to the psbA mRNA during PSII biogenesis and repair. Forms a heterodimer with OHP1 that binds chlorophylls and carotenoids, and that may function in the delivery of pigments to the PsbA subunit of PSII. In Arabidopsis thaliana (Mouse-ear cress), this protein is Light-harvesting complex-like protein OHP2, chloroplastic.